Reading from the N-terminus, the 235-residue chain is Clathrin light chain A (235 aa).

The segment at 1–32 (MAELDPFGAPAGAPGGPALGNGVAGAGEEDPA) is disordered. The span at 13–25 (APGGPALGNGVAG) shows a compositional bias: gly residues. The tract at residues 99–161 (VDRLQSEPES…QLQKTKANNR (63 aa)) is involved in binding clathrin heavy chain. 2 positions are modified to phosphoserine: serine 104 and serine 193. N6-acetyllysine is present on lysine 210. Phosphoserine is present on serine 223. The residue at position 229 (lysine 229) is an N6-acetyllysine.

This sequence belongs to the clathrin light chain family. As to quaternary structure, clathrin coats are formed from molecules containing 3 heavy chains and 3 light chains. Interacts with CALY; the interaction stimulates clathrin self-assembly and clathrin-mediated endocytosis. Interacts with CKAP5 and TACC3 forming the TACC3/ch-TOG/clathrin complex located at spindle inter-microtubules bridges; the complex implicates clathrin triskelions.

The protein localises to the cytoplasmic vesicle membrane. It localises to the membrane. The protein resides in the coated pit. Its subcellular location is the cytoplasm. It is found in the cytoskeleton. The protein localises to the spindle. Functionally, clathrin is the major protein of the polyhedral coat of coated pits and vesicles. Acts as a component of the TACC3/ch-TOG/clathrin complex proposed to contribute to stabilization of kinetochore fibers of the mitotic spindle by acting as inter-microtubule bridge. This is Clathrin light chain A (Clta) from Mus musculus (Mouse).